We begin with the raw amino-acid sequence, 153 residues long: Endoribonuclease YbeY (153 aa).

Zn(2+) contacts are provided by His114, His118, and His124.

This sequence belongs to the endoribonuclease YbeY family. Requires Zn(2+) as cofactor.

Its subcellular location is the cytoplasm. Single strand-specific metallo-endoribonuclease involved in late-stage 70S ribosome quality control and in maturation of the 3' terminus of the 16S rRNA. In Finegoldia magna (strain ATCC 29328 / DSM 20472 / WAL 2508) (Peptostreptococcus magnus), this protein is Endoribonuclease YbeY.